The chain runs to 210 residues: 7-methyl-GTP pyrophosphatase (210 aa).

The Proton acceptor role is filled by aspartate 79.

This sequence belongs to the Maf family. YceF subfamily. A divalent metal cation is required as a cofactor.

The protein localises to the cytoplasm. The catalysed reaction is N(7)-methyl-GTP + H2O = N(7)-methyl-GMP + diphosphate + H(+). Functionally, nucleoside triphosphate pyrophosphatase that hydrolyzes 7-methyl-GTP (m(7)GTP). May have a dual role in cell division arrest and in preventing the incorporation of modified nucleotides into cellular nucleic acids. This chain is 7-methyl-GTP pyrophosphatase, found in Burkholderia orbicola (strain AU 1054).